The primary structure comprises 279 residues: Phosphatidylglycerol--prolipoprotein diacylglyceryl transferase (279 aa).

3 helical membrane-spanning segments follow: residues 18 to 38 (LSVRWYGIIIAVGILLGYFVA), 55 to 75 (IIFYSALFGFIAARIYFVIFQ), and 89 to 109 (IWHGGIAIHGGLIGGFIAGVI). Arg-137 is an a 1,2-diacyl-sn-glycero-3-phospho-(1'-sn-glycerol) binding site. The next 2 helical transmembrane spans lie at 203-223 (LGETFFLYLTWYSIGRFFIEG) and 235-255 (IRVAQLVSILLILISISLIVY).

The protein belongs to the Lgt family.

The protein resides in the cell membrane. The enzyme catalyses L-cysteinyl-[prolipoprotein] + a 1,2-diacyl-sn-glycero-3-phospho-(1'-sn-glycerol) = an S-1,2-diacyl-sn-glyceryl-L-cysteinyl-[prolipoprotein] + sn-glycerol 1-phosphate + H(+). The protein operates within protein modification; lipoprotein biosynthesis (diacylglyceryl transfer). Catalyzes the transfer of the diacylglyceryl group from phosphatidylglycerol to the sulfhydryl group of the N-terminal cysteine of a prolipoprotein, the first step in the formation of mature lipoproteins. This chain is Phosphatidylglycerol--prolipoprotein diacylglyceryl transferase, found in Staphylococcus aureus (strain Mu3 / ATCC 700698).